The chain runs to 188 residues: Glutamyl endopeptidase 2 (188 aa).

A disulfide bond links C14 and C34. Residues H33, D62, and S143 each act as charge relay system in the active site. A disulfide bridge connects residues C137 and C163.

Belongs to the peptidase S1 family. In terms of assembly, monomer.

The enzyme catalyses Preferential cleavage: -Glu-|-Xaa- &gt;&gt; -Asp-|-Xaa-. Preference for Pro or Leu at P2 and Phe at P3. Cleavage of -Glu-|-Asp- and -Glu-|-Pro- bonds is slow.. Its function is as follows. Preferentially cleaves peptide bonds on the carboxyl-terminal side of glutamate. This chain is Glutamyl endopeptidase 2 (sprE), found in Streptomyces griseus.